A 334-amino-acid chain; its full sequence is Ribosomal RNA small subunit methyltransferase H (334 aa).

S-adenosyl-L-methionine contacts are provided by residues 53-55 (GGH), Asp-72, Phe-99, Asp-122, and His-129.

This sequence belongs to the methyltransferase superfamily. RsmH family.

The protein resides in the cytoplasm. It carries out the reaction cytidine(1402) in 16S rRNA + S-adenosyl-L-methionine = N(4)-methylcytidine(1402) in 16S rRNA + S-adenosyl-L-homocysteine + H(+). In terms of biological role, specifically methylates the N4 position of cytidine in position 1402 (C1402) of 16S rRNA. The chain is Ribosomal RNA small subunit methyltransferase H from Leptospira interrogans serogroup Icterohaemorrhagiae serovar copenhageni (strain Fiocruz L1-130).